We begin with the raw amino-acid sequence, 353 residues long: MDFLNKHSSCISKLFSCPSQWQLNAAPGWQAIAAWALIAAGGFFVISRALLFGRVLLSLFVLPGKSLRSFGPKGSWAVVTGASDGLGKEFALQLARAGYNIVLVSRTASKLDTLSDELTSKYPSVQTKVLAMDFARNQDSDYQKLKELIGDLDVAVLINNVGKSHDMPVPFALTSEEEMTDIVTINCMGTLRVTQLVVPGMMQRRRGLILTMGSFGGLLPTPLLATYSGSKAFLQQWSTSLGSELAPYGITVELVQAYLITSAMSKVRRTSALIPNPRAFVKSVLSKIGRNGGSPGYAYSSSPYWSHGLMAWFLTCVTGTMGKLVVGQNRSMHESIRKRALRKAEREKGKKST.

Residues 33–53 traverse the membrane as a helical segment; sequence AAWALIAAGGFFVISRALLFG. The NADP(+) site is built by V78, D133, D141, N160, Y227, K231, I260, and S262. The active-site Proton donor is the Y227. Catalysis depends on K231, which acts as the Lowers pKa of active site Tyr.

The protein belongs to the short-chain dehydrogenases/reductases (SDR) family.

It is found in the endoplasmic reticulum membrane. It catalyses the reaction a very-long-chain (3R)-3-hydroxyacyl-CoA + NADP(+) = a very-long-chain 3-oxoacyl-CoA + NADPH + H(+). Its pathway is lipid metabolism; fatty acid biosynthesis. In terms of biological role, component of the microsomal membrane bound fatty acid elongation system, which produces the 26-carbon very long-chain fatty acids (VLCFA) from palmitate. Catalyzes the reduction of the 3-ketoacyl-CoA intermediate that is formed in each cycle of fatty acid elongation. VLCFAs serve as precursors for ceramide and sphingolipids. The protein is Very-long-chain 3-oxoacyl-CoA reductase of Aspergillus terreus (strain NIH 2624 / FGSC A1156).